The following is a 217-amino-acid chain: LexA repressor (217 aa).

A DNA-binding region (H-T-H motif) is located at residues 26–46; sequence FEEMKLALDLKSKSGIHRLIK. Catalysis depends on for autocatalytic cleavage activity residues serine 138 and lysine 176.

It belongs to the peptidase S24 family. As to quaternary structure, homodimer.

The enzyme catalyses Hydrolysis of Ala-|-Gly bond in repressor LexA.. In terms of biological role, represses a number of genes involved in the response to DNA damage (SOS response), including recA and lexA. In the presence of single-stranded DNA, RecA interacts with LexA causing an autocatalytic cleavage which disrupts the DNA-binding part of LexA, leading to derepression of the SOS regulon and eventually DNA repair. In Zymomonas mobilis subsp. mobilis (strain ATCC 31821 / ZM4 / CP4), this protein is LexA repressor.